The sequence spans 746 residues: Tudor domain-containing protein krimp (746 aa).

The tract at residues 1-310 is involved in homooligomerization; the sequence is MNLEDISMIM…RDIYNQILKD (310 aa). Residues 311–489 form a non-canonical tudor domain region; sequence MAAFPENTIV…PAGITEDDMA (179 aa). The segment at 511–540 adopts a C3H1-type zinc-finger fold; the sequence is KDEQRICRHYDPKLNGCFKGNNCRFAHEPF. Residues 613 to 670 enclose the Tudor domain; it reads KPRLLDIVLALYSDGCFYRAQIIDEFPSEYMIFYVDYGNTEFVPLSCLAPCENVDSFK.

Belongs to the Tudor domain containing protein family. As to quaternary structure, homooligomerizes (via N-terminus). Component of the ping-pong piRNA processing (4P) complex consisting of krimp, aub and AGO3; a single molecule of krimp can bind both aub and AGO3 without the need for homooligomerization. Interacts (via canonical tudor domain) with aub (via N-terminus when symmetrically dimethylated on arginine residues). Interacts (via non-canonical tudor domain) with AGO3 (via N-terminus when unmethylated on arginine residues); this interaction leads to symmetrical dimethylation on AGO3 arginine residues and its subsequent dissociation from krimp. Krimp associated AGO3 is mostly free of piRNA binding and the interaction plays an important role in the loading of AGO3 with piRNAs; piRNA binding stimulates methylation of ACO3 by the csul/PRMT5 methylosome complex and promotes dissociation of the two proteins. Widely expressed in female germline cells, including differentiating germ cells in germarium and egg chambers (at protein level).

It localises to the cytoplasm. Its subcellular location is the perinuclear region. The protein localises to the cytoplasmic ribonucleoprotein granule. Its function is as follows. Stable structural component of the perinuclear meiotic nuage, a germline-specific subcellular membraneless ribonucleoprotein compartment involved in production of transposable element-repressing Piwi-interacting RNA (piRNA)-induced silencing complexes (piRISCs), which are essential for maintaining germline integrity during oogenesis. Scaffold component of the ping-pong piRNA processing (4P) complex that recruits the Piwi proteins aub and AGO3 to specific subregions of the nuage where it coordinates their activity in the ping-pong amplification step of secondary piRNA biogenesis. Binds methylated aub, which is associated with piRNA, and unmethylated AGO3, which is not associated with piRNA, bringing the Piwi proteins into close proximity and facilitating the loading of freshly cut piRNAs generated by aub onto AGO3. Promotes asymmetric ping-pong amplification by aub and AGO3 to bias production towards antisense piRNAs capable of silencing transposable elements. Required for symmetrical dimethylation of AGO3, probably by recruitment to the nuage where methylosome components are located; dimethylation promotes AGO3 dissociation and interaction with other tudor-domain containing proteins such as tud. Required for the recruitment of mael to the perinuclear meiotic nuage. Required for the recruitment of aub to the nuage in testes but not in ovaries. Involved in repression of long interspersed nuclear elements (LINEs) including HeT-A, I-element LINEs and possibly mst40, but not TART LINEs. The polypeptide is Tudor domain-containing protein krimp (Drosophila melanogaster (Fruit fly)).